The following is a 420-amino-acid chain: Tyrosine--tRNA ligase (420 aa).

An L-tyrosine-binding site is contributed by Y38. The 'HIGH' region motif lies at 43–52; sequence PTGDSLHIGH. L-tyrosine-binding residues include Y169 and Q173. A 'KMSKS' region motif is present at residues 231–235; the sequence is KFGKS. An ATP-binding site is contributed by K234. In terms of domain architecture, S4 RNA-binding spans 353–419; the sequence is KNIVDFLVDT…GKRKYTLVTI (67 aa).

It belongs to the class-I aminoacyl-tRNA synthetase family. TyrS type 1 subfamily. In terms of assembly, homodimer.

The protein resides in the cytoplasm. The enzyme catalyses tRNA(Tyr) + L-tyrosine + ATP = L-tyrosyl-tRNA(Tyr) + AMP + diphosphate + H(+). Its function is as follows. Catalyzes the attachment of tyrosine to tRNA(Tyr) in a two-step reaction: tyrosine is first activated by ATP to form Tyr-AMP and then transferred to the acceptor end of tRNA(Tyr). The protein is Tyrosine--tRNA ligase of Lactobacillus acidophilus (strain ATCC 700396 / NCK56 / N2 / NCFM).